The sequence spans 714 residues: Forkhead box protein P2 (714 aa).

A compositionally biased stretch (polar residues) spans 1–28; the sequence is MMQESATETISNSSMNQNGMSTLSSQLD. 2 disordered regions span residues 1–45 and 280–338; these read MMQE…SEVS and DNGI…TGAS. Low complexity predominate over residues 291 to 304; that stretch reads TTNNSSSTTSSTTS. Polar residues predominate over residues 314-323; sequence SIVNGQSSVL. The span at 325 to 336 shows a compositional bias: basic and acidic residues; that stretch reads ARRDSSSHEETG. The segment at 345 to 370 adopts a C2H2-type zinc-finger fold; it reads GVCKWPGCESICEDFGQFLKHLNNEH. Residues 387-408 are leucine-zipper; it reads VQQLEIQLSKERERLQAMMTHL. Residues 421–425 are CTBP1-binding; the sequence is PLNLV. Low complexity predominate over residues 437–458; the sequence is TSPQSLPQTPTTPTAPVTPITQ. The disordered stretch occupies residues 437 to 464; it reads TSPQSLPQTPTTPTAPVTPITQGPSVIT. Residues 503–593 constitute a DNA-binding region (fork-head); it reads RPPFTYATLI…SQKITGSPTL (91 aa). Disordered regions lie at residues 648–667 and 677–714; these read LDHI…QPHI and VIAE…EDLE. Acidic residues predominate over residues 698-714; the sequence is LEDDREIEEEPLSEDLE.

In terms of assembly, forms homodimers and heterodimers with FOXP1 and FOXP4. Dimerization is required for DNA-binding. Interacts with CTBP1. Interacts with FOXP1. Interacts with TBR1. Interacts with ZMYM2. As to expression, highest expression in lung. Lower expression in spleen, skeletal muscle, brain, kidney and small intestine.

It localises to the nucleus. In terms of biological role, transcriptional repressor that may play a role in the specification and differentiation of lung epithelium. May also play a role in developing neural, gastrointestinal and cardiovascular tissues. Can act with CTBP1 to synergistically repress transcription but CTPBP1 is not essential. Plays a role in synapse formation by regulating SRPX2 levels. This Mus musculus (Mouse) protein is Forkhead box protein P2 (Foxp2).